We begin with the raw amino-acid sequence, 403 residues long: Renin (403 aa).

The N-terminal stretch at 1-22 (MARCRMPRWGLLLVLWGSCTFG) is a signal peptide. The propeptide at 23-65 (LPADTGAFRRIFLKKMPSIRESLKERGVDVAGLGAEWNQFTKR) is activation peptide. N70 carries an N-linked (GlcNAc...) asparagine glycan. The region spanning 85 to 400 (YYGEIGIGTP…DRHNNRIGFA (316 aa)) is the Peptidase A1 domain. D103 is a catalytic residue. C116 and C123 are oxidised to a cystine. N140 is a glycosylation site (N-linked (GlcNAc...) asparagine). A disulfide bridge links C279 with C283. Residue D288 is part of the active site. C322 and C359 are oxidised to a cystine.

This sequence belongs to the peptidase A1 family. As to quaternary structure, interacts with ATP6AP2.

Its subcellular location is the secreted. It is found in the membrane. It catalyses the reaction Cleavage of Leu-|-Xaa bond in angiotensinogen to generate angiotensin I.. Its activity is regulated as follows. Interaction with ATP6AP2 results in a 5-fold increased efficiency in angiotensinogen processing. Functionally, renin is a highly specific endopeptidase, whose only known function is to generate angiotensin I from angiotensinogen in the plasma, initiating a cascade of reactions that produce an elevation of blood pressure and increased sodium retention by the kidney. This Canis lupus familiaris (Dog) protein is Renin (REN).